Here is a 624-residue protein sequence, read N- to C-terminus: Protein POLLEN DEFECTIVE IN GUIDANCE 1 (624 aa).

The tract at residues 20 to 63 (SFENDDTSIRRSSSDPITGNVASESPRDYGKRKRSKKKKKKVNQ) is disordered. Positions 33-42 (SDPITGNVAS) are enriched in polar residues. Over residues 49-61 (GKRKRSKKKKKKV) the composition is skewed to basic residues. 6 consecutive transmembrane segments (helical) span residues 263–283 (VLID…LTVM), 305–325 (ASEL…ILLG), 391–411 (FVSD…ILLA), 413–433 (AITL…LLVS), 545–565 (LTFV…PVYA), and 578–598 (LWMV…KVLI).

It belongs to the TAPT1 family. In terms of assembly, interacts with CRT3, but not with CRT1 or CNX. As to expression, expressed in inflorescences, siliques, roots and shoots. Expressed in early embryo, endosperm, mature pollen and pollen tubes, synergide cells and weakly in antipodal cells.

The protein localises to the membrane. Its subcellular location is the endoplasmic reticulum lumen. Its function is as follows. Probable component of the calreticulin 3 (CRT3) complex, acting probably as a co-chaperone involved in protein retention in the endoplasmic reticulum lumen. Required for micropylar pollen tube guidance. Plays an essential role in cell plate orientation or positioning in early embryo patterning. The chain is Protein POLLEN DEFECTIVE IN GUIDANCE 1 (POD1) from Arabidopsis thaliana (Mouse-ear cress).